Consider the following 807-residue polypeptide: AP-5 complex subunit zeta-1 (807 aa).

As to quaternary structure, probably part of the adaptor protein complex 5 (AP-5) a tetramer composed of AP5B1, AP5M1, AP5S1 and AP5Z1. Interacts with ZFYVE26 and SPG11.

It is found in the cytoplasm. Its subcellular location is the nucleus. Functionally, as part of AP-5, a probable fifth adaptor protein complex it may be involved in endosomal transport. According to PubMed:20613862 it is a putative helicase required for efficient homologous recombination DNA double-strand break repair. This chain is AP-5 complex subunit zeta-1 (AP5Z1), found in Homo sapiens (Human).